The sequence spans 475 residues: Ribulose bisphosphate carboxylase large chain (475 aa).

The propeptide occupies 1–2 (MV). The residue at position 3 (Pro-3) is an N-acetylproline. At Lys-14 the chain carries N6,N6,N6-trimethyllysine. Positions 123 and 173 each coordinate substrate. Lys-175 (proton acceptor) is an active-site residue. Residue Lys-177 coordinates substrate. Residues Lys-201, Asp-203, and Glu-204 each coordinate Mg(2+). Lys-201 bears the N6-carboxylysine mark. His-294 (proton acceptor) is an active-site residue. 3 residues coordinate substrate: Arg-295, His-327, and Ser-379.

It belongs to the RuBisCO large chain family. Type I subfamily. As to quaternary structure, heterohexadecamer of 8 large chains and 8 small chains. Mg(2+) serves as cofactor.

It localises to the plastid. It is found in the chloroplast. It carries out the reaction 2 (2R)-3-phosphoglycerate + 2 H(+) = D-ribulose 1,5-bisphosphate + CO2 + H2O. The enzyme catalyses D-ribulose 1,5-bisphosphate + O2 = 2-phosphoglycolate + (2R)-3-phosphoglycerate + 2 H(+). Functionally, ruBisCO catalyzes two reactions: the carboxylation of D-ribulose 1,5-bisphosphate, the primary event in carbon dioxide fixation, as well as the oxidative fragmentation of the pentose substrate in the photorespiration process. Both reactions occur simultaneously and in competition at the same active site. The chain is Ribulose bisphosphate carboxylase large chain from Stigeoclonium helveticum (Green alga).